Consider the following 151-residue polypeptide: Cytochrome c-type biogenesis protein CcmE (151 aa).

The Cytoplasmic portion of the chain corresponds to 1 to 8 (MNPLRRKR). The chain crosses the membrane as a helical; Signal-anchor for type II membrane protein span at residues 9–29 (LLIILAILVGVGIAVGLALSA). Residues 30–151 (LQQNINLFYT…QSAPTPAKEG (122 aa)) are Periplasmic-facing. The heme site is built by His-124 and Tyr-128.

It belongs to the CcmE/CycJ family.

It is found in the cell inner membrane. Heme chaperone required for the biogenesis of c-type cytochromes. Transiently binds heme delivered by CcmC and transfers the heme to apo-cytochromes in a process facilitated by CcmF and CcmH. The protein is Cytochrome c-type biogenesis protein CcmE of Pseudomonas fluorescens (strain SBW25).